Consider the following 617-residue polypeptide: Electron transfer flavoprotein-ubiquinone oxidoreductase, mitochondrial (617 aa).

A mitochondrion-targeting transit peptide spans Met-1–Trp-33. Position 75 to 80 (Gly-75 to Gly-80) interacts with FAD. Lys-96 carries the N6-acetyllysine modification. An intramembrane segment occupies Ile-109–Asp-130. Lys-132 and Lys-223 each carry N6-acetyllysine. 2 residues coordinate a ubiquinone: Gly-305 and Gly-306. Lys-357 is subject to N6-acetyllysine. The stretch at Ile-428–Glu-447 is an intramembrane region. Phosphoserine is present on Ser-551. Residues Cys-561, Cys-586, Cys-589, and Cys-592 each coordinate [4Fe-4S] cluster. The 4Fe-4S ferredoxin-type domain maps to Phe-577–Pro-606.

In terms of assembly, monomer. [4Fe-4S] cluster is required as a cofactor. Requires FAD as cofactor.

The protein resides in the mitochondrion inner membrane. It carries out the reaction a ubiquinone + reduced [electron-transfer flavoprotein] = a ubiquinol + oxidized [electron-transfer flavoprotein] + H(+). Accepts electrons from ETF and reduces ubiquinone. This is Electron transfer flavoprotein-ubiquinone oxidoreductase, mitochondrial (ETFDH) from Sus scrofa (Pig).